Here is a 288-residue protein sequence, read N- to C-terminus: Small ribosomal subunit protein uS2 (288 aa).

The segment at 267 to 288 (EEVEEVEEEFIPSEIEDEDEKF) is disordered.

It belongs to the universal ribosomal protein uS2 family.

The polypeptide is Small ribosomal subunit protein uS2 (Petrotoga mobilis (strain DSM 10674 / SJ95)).